The sequence spans 545 residues: DNA-binding protein REPIN1 (545 aa).

Residues 1–50 (MLEQRCRGPTAMGPAQPWLFSGPSQESSQPDRGLRYQGKSAQPRGQTPGK) are disordered. S27 is modified (phosphoserine). Position 39 is an N6-acetyllysine (K39). A C2H2-type 1; atypical zinc finger spans residues 52 to 74 (HRCAHCRKRFPGWVALWLHARRC). 2 consecutive C2H2-type zinc fingers follow at residues 80–102 (LPCHECNQRFRHAPFLALHLQVH) and 111–133 (FICHLCGHSFRGWVALVLHLRAH). Residues 140-162 (ITCPECDRRFWRQKQLRAHLRRC) form a C2H2-type 4; atypical zinc finger. C2H2-type zinc fingers lie at residues 172–194 (FICGNCGRSFAQWDQLVVHKRVH), 229–251 (FQCACCGKRFRHKPNLIAHRRVH), 257–279 (HQCPECGKRFTNKPYLTSHRRIH), 285–307 (YPCTECGRRFRHKPNLLSHSKIH), 353–375 (HSCSDCGRSFRLERFLRLHQRQH), 381–403 (FACTECGKNFGKKTHLVAHSRVH), 409–431 (FACEECGRRFSQGSHLAAHRRDH), 437–459 (FVCPDCGKAFRHKPYLAAHRRIH), 465–487 (YVCPDCGKAFSQKSNLVSHRRIH), 493–515 (YACPDCDRSFSQKSNLITHRKSH), and 521–543 (FCCAICGQTFDDEDRLLMHQKKH). Position 269 is an N6-acetyllysine (K269).

As to quaternary structure, homodimers and homomultimers. Found in a complex with RIP60 and RIP100.

It localises to the nucleus. Its subcellular location is the cytoplasm. The protein resides in the cytosol. In terms of biological role, sequence-specific double-stranded DNA-binding protein. Binds ATT-rich and T-rich DNA sequences and facilitates DNA bending. May regulate the expression of genes involved in cellular fatty acid import, including SCARB1/CD36, and genes involved in lipid droplet formation. May regulate the expression of LCN2, and thereby influence iron metabolism and apoptosis-related pathways. May regulate the expression of genes involved in glucose transport. This is DNA-binding protein REPIN1 (Repin1) from Mus musculus (Mouse).